A 220-amino-acid polypeptide reads, in one-letter code: DNA-directed RNA polymerase subunit alpha (220 aa).

It belongs to the RNA polymerase alpha chain family. As to quaternary structure, in plastids the minimal PEP RNA polymerase catalytic core is composed of four subunits: alpha, beta, beta', and beta''. When a (nuclear-encoded) sigma factor is associated with the core the holoenzyme is formed, which can initiate transcription.

The protein resides in the plastid. It carries out the reaction RNA(n) + a ribonucleoside 5'-triphosphate = RNA(n+1) + diphosphate. Its function is as follows. DNA-dependent RNA polymerase catalyzes the transcription of DNA into RNA using the four ribonucleoside triphosphates as substrates. In Euglena longa (Euglenophycean alga), this protein is DNA-directed RNA polymerase subunit alpha (rpoA).